Here is a 66-residue protein sequence, read N- to C-terminus: uncharacterized protein (66 aa).

This sequence belongs to the YeeT/YkfH/YpjJ family.

This is an uncharacterized protein from Escherichia coli (strain K12).